Reading from the N-terminus, the 557-residue chain is Glutamine--tRNA ligase (557 aa).

The short motif at 42-52 (PEPNGYLHIGH) is the 'HIGH' region element. Residues 43–45 (EPN) and 49–55 (HIGHAKS) contribute to the ATP site. Residues Asp75 and Tyr220 each coordinate L-glutamine. ATP is bound by residues Thr239 and 270-271 (RL). The 'KMSKS' region motif lies at 277 to 281 (LTSKR).

This sequence belongs to the class-I aminoacyl-tRNA synthetase family. As to quaternary structure, monomer.

It localises to the cytoplasm. The catalysed reaction is tRNA(Gln) + L-glutamine + ATP = L-glutaminyl-tRNA(Gln) + AMP + diphosphate. This Haemophilus influenzae (strain 86-028NP) protein is Glutamine--tRNA ligase.